A 549-amino-acid polypeptide reads, in one-letter code: Glucose-6-phosphate isomerase (549 aa).

E355 serves as the catalytic Proton donor. Residues H386 and K514 contribute to the active site.

It belongs to the GPI family.

Its subcellular location is the cytoplasm. The enzyme catalyses alpha-D-glucose 6-phosphate = beta-D-fructose 6-phosphate. Its pathway is carbohydrate biosynthesis; gluconeogenesis. It participates in carbohydrate degradation; glycolysis; D-glyceraldehyde 3-phosphate and glycerone phosphate from D-glucose: step 2/4. In terms of biological role, catalyzes the reversible isomerization of glucose-6-phosphate to fructose-6-phosphate. The polypeptide is Glucose-6-phosphate isomerase (Salmonella paratyphi A (strain AKU_12601)).